Reading from the N-terminus, the 89-residue chain is Small ribosomal subunit protein uS15 (89 aa).

The protein belongs to the universal ribosomal protein uS15 family. In terms of assembly, part of the 30S ribosomal subunit. Forms a bridge to the 50S subunit in the 70S ribosome, contacting the 23S rRNA.

Its function is as follows. One of the primary rRNA binding proteins, it binds directly to 16S rRNA where it helps nucleate assembly of the platform of the 30S subunit by binding and bridging several RNA helices of the 16S rRNA. Forms an intersubunit bridge (bridge B4) with the 23S rRNA of the 50S subunit in the ribosome. The sequence is that of Small ribosomal subunit protein uS15 from Neisseria gonorrhoeae (strain ATCC 700825 / FA 1090).